A 402-amino-acid polypeptide reads, in one-letter code: MQRRKLVEISIFVIRKSNFSSSIKSLTNLDVDVSVDNDEDPLYADVPKPPKDKSERKPYPTPMKELIRRAKEEKQLRKLQPCRVLEDPPDNGLLVPELVDVAHCVHRCRNMLLSGLSKIIHHVPVHRCRLCAEVHIGKQGHEIRTCTGPGSGSRSATHVWKRGRVSDVVLFPKCFHLYDRAVKPRVIHDERFTVPKISAVLELCIQAGVDLEKFPSKRRSKPVYSIEGRIVDFEDVNDGNSELAVTSTTTLIQEDDRCKEEKKSLKELSFETMESWFEMVLGVRKLMERYRVWTCGYCPEIQVGPKGHKVRMCKATKHQMRDGMHAWQEATIDDVVGPTYVWHVRDPTDGSVLDNSLKRFYGKAPAVIEMCVQGGAPVPDQYNSMMRLDVVYPQRDEVDLVA.

The N-terminal 13 residues, 1 to 13 (MQRRKLVEISIFV), are a transit peptide targeting the mitochondrion. Residues 37–59 (NDEDPLYADVPKPPKDKSERKPY) are disordered. A compositionally biased stretch (basic and acidic residues) spans 48–58 (KPPKDKSERKP). APO domains are found at residues 127–213 (RCRL…DLEK) and 294–380 (TCGY…PVPD).

Belongs to the APO family.

It is found in the mitochondrion. Its function is as follows. May be involved in the stable assembly of several 4Fe-4S cluster-containing complexes of mitochondria. This Arabidopsis thaliana (Mouse-ear cress) protein is APO protein 3, mitochondrial (APO3).